A 497-amino-acid polypeptide reads, in one-letter code: tRNA-2-methylthio-N(6)-dimethylallyladenosine synthase (497 aa).

The disordered stretch occupies residues 1–48 (MTGTSNIPTHGKEHKDAPALLPLPAPNTHHTHAAHPGDPSHDRHPSRG). A compositionally biased stretch (low complexity) spans 18-28 (PALLPLPAPNT). The region spanning 48–165 (GKLFIKTHGC…LPDMIRARRE (118 aa)) is the MTTase N-terminal domain. 6 residues coordinate [4Fe-4S] cluster: C57, C94, C128, C202, C206, and C209. Residues 188–430 (RAEGPSAFVS…QKHINAYAAD (243 aa)) enclose the Radical SAM core domain. Positions 433–496 (KRMIGTVQTV…TNSLRGRVHT (64 aa)) constitute a TRAM domain.

The protein belongs to the methylthiotransferase family. MiaB subfamily. In terms of assembly, monomer. [4Fe-4S] cluster is required as a cofactor.

It is found in the cytoplasm. The catalysed reaction is N(6)-dimethylallyladenosine(37) in tRNA + (sulfur carrier)-SH + AH2 + 2 S-adenosyl-L-methionine = 2-methylsulfanyl-N(6)-dimethylallyladenosine(37) in tRNA + (sulfur carrier)-H + 5'-deoxyadenosine + L-methionine + A + S-adenosyl-L-homocysteine + 2 H(+). Its function is as follows. Catalyzes the methylthiolation of N6-(dimethylallyl)adenosine (i(6)A), leading to the formation of 2-methylthio-N6-(dimethylallyl)adenosine (ms(2)i(6)A) at position 37 in tRNAs that read codons beginning with uridine. In Xylella fastidiosa (strain M23), this protein is tRNA-2-methylthio-N(6)-dimethylallyladenosine synthase.